We begin with the raw amino-acid sequence, 118 residues long: Large ribosomal subunit protein bL19 (118 aa).

The protein belongs to the bacterial ribosomal protein bL19 family.

In terms of biological role, this protein is located at the 30S-50S ribosomal subunit interface and may play a role in the structure and function of the aminoacyl-tRNA binding site. This is Large ribosomal subunit protein bL19 from Campylobacter jejuni subsp. doylei (strain ATCC BAA-1458 / RM4099 / 269.97).